A 689-amino-acid polypeptide reads, in one-letter code: tRNA 5-methylaminomethyl-2-thiouridine biosynthesis bifunctional protein MnmC (689 aa).

Residues 1-245 form a tRNA (mnm(5)s(2)U34)-methyltransferase region; it reads MNQRPIQTAT…KREMLTGTLP (245 aa). The interval 270–689 is FAD-dependent cmnm(5)s(2)U34 oxidoreductase; sequence IGGGIVSALT…RSPATQESSR (420 aa).

The protein in the N-terminal section; belongs to the methyltransferase superfamily. tRNA (mnm(5)s(2)U34)-methyltransferase family. This sequence in the C-terminal section; belongs to the DAO family. FAD serves as cofactor.

The protein localises to the cytoplasm. It carries out the reaction 5-aminomethyl-2-thiouridine(34) in tRNA + S-adenosyl-L-methionine = 5-methylaminomethyl-2-thiouridine(34) in tRNA + S-adenosyl-L-homocysteine + H(+). Catalyzes the last two steps in the biosynthesis of 5-methylaminomethyl-2-thiouridine (mnm(5)s(2)U) at the wobble position (U34) in tRNA. Catalyzes the FAD-dependent demodification of cmnm(5)s(2)U34 to nm(5)s(2)U34, followed by the transfer of a methyl group from S-adenosyl-L-methionine to nm(5)s(2)U34, to form mnm(5)s(2)U34. This is tRNA 5-methylaminomethyl-2-thiouridine biosynthesis bifunctional protein MnmC from Yersinia pestis.